We begin with the raw amino-acid sequence, 399 residues long: 3-phosphoshikimate 1-carboxyvinyltransferase (399 aa).

3-phosphoshikimate contacts are provided by K19, S20, and R24. Residue K19 coordinates phosphoenolpyruvate. Positions 83 and 111 each coordinate phosphoenolpyruvate. 3-phosphoshikimate-binding residues include S152, S153, Q154, D288, Q310, and K314. Q154 is a binding site for phosphoenolpyruvate. D288 functions as the Proton acceptor in the catalytic mechanism. R318, R359, and K385 together coordinate phosphoenolpyruvate.

Belongs to the EPSP synthase family. In terms of assembly, monomer.

The protein resides in the cytoplasm. It carries out the reaction 3-phosphoshikimate + phosphoenolpyruvate = 5-O-(1-carboxyvinyl)-3-phosphoshikimate + phosphate. The protein operates within metabolic intermediate biosynthesis; chorismate biosynthesis. Its function is as follows. Catalyzes the transfer of the enolpyruvyl moiety of phosphoenolpyruvate (PEP) to the 5-hydroxyl of shikimate-3-phosphate (S3P) to produce enolpyruvyl shikimate-3-phosphate and inorganic phosphate. This chain is 3-phosphoshikimate 1-carboxyvinyltransferase, found in Thermococcus kodakarensis (strain ATCC BAA-918 / JCM 12380 / KOD1) (Pyrococcus kodakaraensis (strain KOD1)).